The sequence spans 91 residues: Sec-independent protein translocase protein TatA (91 aa).

Residues 1-21 traverse the membrane as a helical segment; it reads MGAMQPMHWLIVAVVVVILFG.

The protein belongs to the TatA/E family. The Tat system comprises two distinct complexes: a TatABC complex, containing multiple copies of TatA, TatB and TatC subunits, and a separate TatA complex, containing only TatA subunits. Substrates initially bind to the TatABC complex, which probably triggers association of the separate TatA complex to form the active translocon.

Its subcellular location is the cell membrane. Functionally, part of the twin-arginine translocation (Tat) system that transports large folded proteins containing a characteristic twin-arginine motif in their signal peptide across membranes. TatA could form the protein-conducting channel of the Tat system. This chain is Sec-independent protein translocase protein TatA, found in Rhodococcus erythropolis (strain PR4 / NBRC 100887).